Reading from the N-terminus, the 143-residue chain is MFARILGLDVGTKTVGVSVSDLLGMTAQPVETIKIDSEAGELGFERLGVLIKEYKPEKVVLGLPKHMNGDEGIRAEASRDYGTKLANEFGLEVAYQDERLTTAQAEKVLIDGGVRRKERKKSIDKLAAVLILQNYLDAHALKL.

Belongs to the YqgF nuclease family.

It is found in the cytoplasm. Its function is as follows. Could be a nuclease involved in processing of the 5'-end of pre-16S rRNA. The protein is Putative pre-16S rRNA nuclease (ybeB) of Lactococcus lactis subsp. lactis (strain IL1403) (Streptococcus lactis).